Reading from the N-terminus, the 908-residue chain is NADH-quinone oxidoreductase subunit G (908 aa).

In terms of domain architecture, 2Fe-2S ferredoxin-type spans 2-83 (ATIHVDGKEY…GTFISIDDEE (82 aa)). Residues Cys-34, Cys-45, Cys-48, and Cys-67 each contribute to the [2Fe-2S] cluster site. One can recognise a 4Fe-4S His(Cys)3-ligated-type domain in the interval 83-122 (EAKQFRESVVEWLMTNHPHDCPVCEEGGNCHLQDMTVMTG). [4Fe-4S] cluster-binding residues include His-99, Cys-103, Cys-106, Cys-112, Cys-151, Cys-154, Cys-157, Cys-201, Cys-228, Cys-231, Cys-235, and Cys-263. In terms of domain architecture, 4Fe-4S Mo/W bis-MGD-type spans 221–277 (MQFAPSICQQCSIGCNISPGERYGELRRIENRYNGTVNHYFLCDRGRFGYGYVNLKD).

It belongs to the complex I 75 kDa subunit family. As to quaternary structure, composed of 13 different subunits. Subunits NuoCD, E, F, and G constitute the peripheral sector of the complex. [2Fe-2S] cluster is required as a cofactor. Requires [4Fe-4S] cluster as cofactor.

The protein localises to the cytoplasm. It is found in the cell inner membrane. It catalyses the reaction a quinone + NADH + 5 H(+)(in) = a quinol + NAD(+) + 4 H(+)(out). In terms of biological role, NDH-1 shuttles electrons from NADH, via FMN and iron-sulfur (Fe-S) centers, to quinones in the respiratory chain. The immediate electron acceptor for the enzyme in this species is believed to be ubiquinone. Couples the redox reaction to proton translocation (for every two electrons transferred, four hydrogen ions are translocated across the cytoplasmic membrane), and thus conserves the redox energy in a proton gradient. The chain is NADH-quinone oxidoreductase subunit G (nuoG) from Escherichia coli (strain K12).